The chain runs to 192 residues: Ribosome maturation factor RimM (192 aa).

The 75-residue stretch at glutamate 115–leucine 189 folds into the PRC barrel domain.

Belongs to the RimM family. Binds ribosomal protein uS19.

The protein localises to the cytoplasm. Its function is as follows. An accessory protein needed during the final step in the assembly of 30S ribosomal subunit, possibly for assembly of the head region. Essential for efficient processing of 16S rRNA. May be needed both before and after RbfA during the maturation of 16S rRNA. It has affinity for free ribosomal 30S subunits but not for 70S ribosomes. The sequence is that of Ribosome maturation factor RimM from Acaryochloris marina (strain MBIC 11017).